Reading from the N-terminus, the 499-residue chain is Glycerol kinase (499 aa).

Threonine 12 serves as a coordination point for ADP. ATP-binding residues include threonine 12, threonine 13, and serine 14. Residue threonine 12 participates in sn-glycerol 3-phosphate binding. Arginine 16 lines the ADP pocket. The sn-glycerol 3-phosphate site is built by arginine 82, glutamate 83, tyrosine 134, and aspartate 243. 5 residues coordinate glycerol: arginine 82, glutamate 83, tyrosine 134, aspartate 243, and glutamine 244. 2 residues coordinate ADP: threonine 265 and glycine 308. 4 residues coordinate ATP: threonine 265, glycine 308, glutamine 312, and glycine 411. Glycine 411 lines the ADP pocket.

The protein belongs to the FGGY kinase family.

It catalyses the reaction glycerol + ATP = sn-glycerol 3-phosphate + ADP + H(+). The protein operates within polyol metabolism; glycerol degradation via glycerol kinase pathway; sn-glycerol 3-phosphate from glycerol: step 1/1. Its activity is regulated as follows. Inhibited by fructose 1,6-bisphosphate (FBP). In terms of biological role, key enzyme in the regulation of glycerol uptake and metabolism. Catalyzes the phosphorylation of glycerol to yield sn-glycerol 3-phosphate. This is Glycerol kinase from Agrobacterium fabrum (strain C58 / ATCC 33970) (Agrobacterium tumefaciens (strain C58)).